We begin with the raw amino-acid sequence, 762 residues long: Transcription factor kpeA (762 aa).

Residues 267-361 (FDHTSHGSQS…PLKPDQRKQA (95 aa)) are disordered. Residues 294 to 312 (KKPSSPTRSTGSSSSTSPP) show a composition bias toward low complexity. A DNA-binding region (zn(2)-C6 fungal-type) is located at residues 370 to 401 (CLRCKFLKKTCDKGEPCAGCQPSHARLWQVPC).

It is found in the nucleus. Its function is as follows. Transcription factor that regulates conidiation as well as kojic acid production, likely by negatively controlling kojR and kojA expression. This Aspergillus oryzae (strain ATCC 42149 / RIB 40) (Yellow koji mold) protein is Transcription factor kpeA.